A 156-amino-acid polypeptide reads, in one-letter code: Ribosomal RNA large subunit methyltransferase H (156 aa).

S-adenosyl-L-methionine contacts are provided by residues Leu73, Gly104, and 123-128; that span reads LSPLTL.

The protein belongs to the RNA methyltransferase RlmH family. Homodimer.

The protein localises to the cytoplasm. It carries out the reaction pseudouridine(1915) in 23S rRNA + S-adenosyl-L-methionine = N(3)-methylpseudouridine(1915) in 23S rRNA + S-adenosyl-L-homocysteine + H(+). Specifically methylates the pseudouridine at position 1915 (m3Psi1915) in 23S rRNA. This is Ribosomal RNA large subunit methyltransferase H from Pseudoalteromonas atlantica (strain T6c / ATCC BAA-1087).